The primary structure comprises 324 residues: Fibronectin type III domain-containing protein 8 (324 aa).

The region spanning 179–280 is the Fibronectin type-III domain; the sequence is PDTPFIFEHT…KPYKFATLAT (102 aa).

The polypeptide is Fibronectin type III domain-containing protein 8 (FNDC8) (Macaca fascicularis (Crab-eating macaque)).